Consider the following 345-residue polypeptide: uncharacterized protein (345 aa).

It localises to the plastid. The protein localises to the chloroplast. This is an uncharacterized protein from Chlamydomonas moewusii (Chlamydomonas eugametos).